The following is a 242-amino-acid chain: C-reactive protein 1.4 (242 aa).

A signal peptide spans 1–24 (MKTFHGPTFGTAVFLYLLLFLTSA). The 212-residue stretch at 30-241 (ITSKVKFPPS…GVVLSPNEIC (212 aa)) folds into the Pentraxin (PTX) domain. Phosphocholine is bound by residues Thr-60 and Tyr-63. 2 cysteine pairs are disulfide-bonded: Cys-62/Cys-125 and Cys-112/Cys-144. Residues Asp-85 and Asn-86 each coordinate Ca(2+). Residue Asn-147 is glycosylated (N-linked (GlcNAc...) asparagine). Ca(2+) is bound by residues Glu-168, Gln-169, Asp-170, and Gln-180. Residues Cys-207 and Cys-241 are joined by a disulfide bond.

The protein belongs to the pentraxin family. Homopentamer. Pentraxin (or pentaxin) have a discoid arrangement of 5 non-covalently bound subunits. Requires Ca(2+) as cofactor.

The protein localises to the secreted. Might serve the role of immunoglobulins. The polypeptide is C-reactive protein 1.4 (Limulus polyphemus (Atlantic horseshoe crab)).